The sequence spans 805 residues: MKRAGTLRLLSDLSNFTGAARLRELLAGDPAVLVRCSPDGRHLLLLRPPGSPAPQLLVAVRGPGLPLERAWPEGDPSPLDVFFVPWLARPALILVWESGLAEVWGVGMEPGWKLLQSTELCPDGGARVMAVAATRGRLVWCEERQPGVKDQPEQLSTAFSHRVCFKTLETSGEAGTKLGCTHILLHHCPLFGLIASRKDLFLVPTTNTWSGVAHLLLIWSPSKGKVIVAAPSLGLSHSKSLNPKQGDTWDFRTLLRGLPGFLSPREPLAVHTWAPSSQGLLLLDLKGKVSLVQCHGGTRTVGILQEAPVSLKGSAALGTFHGTLACVLGSTLELLDMSSGRLLEKKVLSTDRVHLLEPPAPGMKNEEELETRGALRLLSALGLFCVCWETPQGLELPSDKDLVFEEACGYYQRRSLRGTQLTPEELRHNSMFRAPQALASILQGHLPPSTLLTTLRAELRDYRSIEQLKAQLVAGDDEEAGWTELAEHEVARLLRTQLTGDQLAQFNTIFQALPTAAWGATLQALQLQPDRSGRLRSQAPPDVWKKVLRAPTAGKEHPNGILPPFELLCQCLGQLEPQWLPPFVKLAQQQGGPGWGAEGPSLPLYRRALAVLGEEGKRPEALELELLLGSGRPKAVLQAVRQLIKKEEWERALEAGLALDASSPLLRSEIFKLLLAEFAQHRRLDAHLPLLCRLCPPEVAPHELLLLLRTHLPDDEGTTPFPEPGAEPPLTVGLVRALLEQTGAQGRPSGPVQSTYEDILWDPGTPPPTPPRGPTASLPASDHPGQEAWVPPGQGLGAADVGVHL.

Residues 743–805 (GAQGRPSGPV…LGAADVGVHL (63 aa)) form a disordered region. The segment covering 764–773 (GTPPPTPPRG) has biased composition (pro residues).

In terms of assembly, component of the biogenesis of lysosome-related organelles complex-2 (or BLOC2) composed of HPS3, HPS5 and HPS6. Interacts with HPS5 and HPS3. Interacts with biogenesis of lysosome-related organelles complex-1 (BLOC1). Interacts with dynein intermediate chain. Interacts with AP-3 complex. Interacts with DCTN1. As to expression, widely expressed, with lowest expression in skeletal muscle.

It is found in the microsome membrane. It localises to the cytoplasm. The protein resides in the cytosol. Its subcellular location is the early endosome membrane. The protein localises to the lysosome membrane. Functionally, may regulate the synthesis and function of lysosomes and of highly specialized organelles, such as melanosomes and platelet dense granules. Acts as a cargo adapter for the dynein-dynactin motor complex to mediate the transport of lysosomes from the cell periphery to the perinuclear region. Facilitates retrograde lysosomal trafficking by linking the motor complex to lysosomes, and perinuclear positioning of lysosomes is crucial for the delivery of endocytic cargos to lysosomes, for lysosome maturation and functioning. The sequence is that of BLOC-2 complex member HPS6 (Hps6) from Mus musculus (Mouse).